A 431-amino-acid chain; its full sequence is Adenylosuccinate synthetase (431 aa).

Residues 12–18 and 40–42 contribute to the GTP site; these read GDEGKGK and GHT. Catalysis depends on D13, which acts as the Proton acceptor. Mg(2+) contacts are provided by D13 and G40. IMP contacts are provided by residues 13–16, 38–41, T131, R145, Q225, T240, and R304; these read DEGK and NAGH. The Proton donor role is filled by H41. 300–306 is a binding site for substrate; sequence TTTGRKR. GTP-binding positions include R306, 332 to 334, and 414 to 416; these read KLD and STS.

Belongs to the adenylosuccinate synthetase family. In terms of assembly, homodimer. Requires Mg(2+) as cofactor.

Its subcellular location is the cytoplasm. The catalysed reaction is IMP + L-aspartate + GTP = N(6)-(1,2-dicarboxyethyl)-AMP + GDP + phosphate + 2 H(+). It functions in the pathway purine metabolism; AMP biosynthesis via de novo pathway; AMP from IMP: step 1/2. Its function is as follows. Plays an important role in the de novo pathway of purine nucleotide biosynthesis. Catalyzes the first committed step in the biosynthesis of AMP from IMP. The polypeptide is Adenylosuccinate synthetase (Jannaschia sp. (strain CCS1)).